The chain runs to 645 residues: MRSTQKTLALWFFLIIMAVFLFQAYESKQQKAIADFNFSKFTEAVKAGEVATVTFRQDTSEVVGEMKPEFEKKYNGTHFSIVGNTQDEGYKFLQQHGITPNYERADNGGFFQSLLVNWLPLILIVAMFLFIMRQIQAGGGKAMSFGKSRARLLTEHKNRVTFKEVAGVDEAKEDLQEIVSFLKDPKKYTKLGGRIPKGVLLVGSPGTGKTLLARAVAGEAGVPFFTISGSDFVEMFVGVGASRVRDLFEQGKKNAPCLIFIDEIDAVGRHRGAGMGGGHDEREQTLNQLLVEMDGFESSEGVIMIAATNRPDVLDPALLRPGRFDRRVIVNKPDLKGREQILAVHMRKTPLGPDVDASKIARGTPGFSGADLENLVNEAALVAARSDKKYLEMEDFEKAKDKVTMGAERRSMVISDEDKKVTAYHEAGHTLVGKKLVGLDPIHKVTIIPRGMALGVTQTLPEKESVSLSKSKAENMIAFLFGGRAAEELIFKDITTGAGNDIERATEIARRMVCEWGMSKLGPLAYETRDNPVFMGMGYGNKSKEYSDAKAQEIDTEVEKIIKHGYDISIQILRDHQDALERLTQALLEYETIDGHEVDMLVNGAAVAEIEKYRNAKKDSNAAIMNAAEKKGSGDPVGNTGPVTI.

Residues 1–6 (MRSTQK) are Cytoplasmic-facing. The helical transmembrane segment at 7 to 27 (TLALWFFLIIMAVFLFQAYES) threads the bilayer. The Periplasmic portion of the chain corresponds to 28-110 (KQQKAIADFN…NYERADNGGF (83 aa)). A helical membrane pass occupies residues 111–131 (FQSLLVNWLPLILIVAMFLFI). At 132–645 (MRQIQAGGGK…PVGNTGPVTI (514 aa)) the chain is on the cytoplasmic side. An ATP-binding site is contributed by 203–210 (GSPGTGKT). H425 is a binding site for Zn(2+). E426 is an active-site residue. H429 and D501 together coordinate Zn(2+).

It in the central section; belongs to the AAA ATPase family. The protein in the C-terminal section; belongs to the peptidase M41 family. Homohexamer. It depends on Zn(2+) as a cofactor.

It localises to the cell inner membrane. Acts as a processive, ATP-dependent zinc metallopeptidase for both cytoplasmic and membrane proteins. Plays a role in the quality control of integral membrane proteins. The polypeptide is ATP-dependent zinc metalloprotease FtsH 1 (Bdellovibrio bacteriovorus (strain ATCC 15356 / DSM 50701 / NCIMB 9529 / HD100)).